An 869-amino-acid polypeptide reads, in one-letter code: H(+)/Cl(-) exchange transporter 6 (869 aa).

At 1–80 (MAGCRGSLCC…KKGRRYEAVK (80 aa)) the chain is on the cytoplasmic side. 2 consecutive transmembrane segments (helical) span residues 81-113 (WMVV…FGVV) and 128-150 (LSLL…LVLI). Positions 156-160 (GSGIP) match the Selectivity filter part_1 motif. Ser-157 lines the chloride pocket. The helical intramembrane region spans 159–166 (IPEVKCYL). A run of 2 helical transmembrane segments spans residues 176 to 194 (RLRT…VAGG) and 200 to 217 (EGPM…LPQF). The short motif at 198-202 (EKEGP) is the Selectivity filter part_2 element. 2 consecutive intramembrane regions (helical) follow at residues 241 to 253 (FVSA…VAAA) and 257 to 265 (PIGGTLFSL). 3 helical membrane passes run 277–294 (TWKV…LNFF), 335–364 (GFFV…YRMR), and 371–392 (KLVR…VFVA). N-linked (GlcNAc...) asparagine glycosylation is found at Asn-410, Asn-422, and Asn-432. The next 2 helical transmembrane spans lie at 462-481 (PVTL…WTYG) and 487-511 (GLFV…KSYI). Positions 487–491 (GLFVP) match the Selectivity filter part_3 motif. Chloride is bound at residue Phe-489. The segment at residues 519-533 (GTFALIGAAAFLGGV) is an intramembrane region (helical). The segment at residues 534–536 (VRM) is an intramembrane region (note=Loop between two helices). Positions 537–548 (TISLTVILIEST) form an intramembrane region, helical. An intramembrane region (note=Loop between two helices) is located at residues 549–552 (NEIT). The chain crosses the membrane as a helical span at residues 553–571 (YGLPIMVTLMVAKWTGDFF). Residues 572–869 (NKGIYDIHVG…ARLRQHYQTI (298 aa)) are Cytoplasmic-facing. Tyr-576 provides a ligand contact to chloride. The CBS 1 domain occupies 605 to 662 (MEPNLTYVYPHTRIQSLVSILRTTVHHAFPVVTENRGNEKEFMKGNQLISNNIKFKKS). 630–632 (HHA) contributes to the ATP binding site. Residue Ser-773 is modified to Phosphoserine. One can recognise a CBS 2 domain in the interval 807 to 868 (MNPSPFTVSP…QARLRQHYQT (62 aa)). 849 to 852 (TRHN) provides a ligand contact to ATP.

It belongs to the chloride channel (TC 2.A.49) family. ClC-6/CLCN6 subfamily. N-glycosylated on several asparagine residues. Testis, ovary, small intestine, brain and skeletal muscle. Low level expression in aortic and coronary vascular smooth muscle cells, and aortic endothelial cells. Isoform 3 is only detected in kidney.

Its subcellular location is the late endosome membrane. The catalysed reaction is 2 chloride(in) + H(+)(out) = 2 chloride(out) + H(+)(in). In terms of biological role, voltage-gated channel mediating the exchange of chloride ions against protons. Functions as antiporter and contributes to the acidification of the late endosome lumen. The CLC channel family contains both chloride channels and proton-coupled anion transporters that exchange chloride or another anion for protons. The presence of conserved gating glutamate residues is typical for family members that function as antiporters. This is H(+)/Cl(-) exchange transporter 6 from Homo sapiens (Human).